The primary structure comprises 319 residues: MATH domain and coiled-coil domain-containing protein At3g58200 (319 aa).

Residues 6 to 132 (DNKFRWVIKN…NEEVKIVVEV (127 aa)) form the MATH domain. The stretch at 255–302 (FKVDWLEKKLEEVKEKKKEEQIGETRMQEMKVFKQKCSDIEALMEREK) forms a coiled coil.

The protein is MATH domain and coiled-coil domain-containing protein At3g58200 of Arabidopsis thaliana (Mouse-ear cress).